We begin with the raw amino-acid sequence, 319 residues long: MFPANWTSVKVFFFLGFFHYPKVQVIIFAVCLLMYLITLLGNIFLISITILDSHLHTPMYLFLSNLSFLDIWYSSSALSPMLANFVSGRNTISFSGCATQMYLSLAMGSTECVLLPMMAYDRYVAICNPLRYPVIMNRRTCVQIAAGSWMTGCLTAMVEMMSVLPLSLCGNSIINHFTCEILAILKLVCVDTSLVQLIMLVISVLLLPMPMLLICISYAFILASILRISSVEGRSKAFSTCTAHLMVVVLFYGTALSMHLKPSAVDSQEIDKFMALVYAGQTPMLNPIIYSLRNKEVKVALKKLLIRNHFNTAFISILK.

The Extracellular portion of the chain corresponds to 1-25 (MFPANWTSVKVFFFLGFFHYPKVQV). Asn-5 carries an N-linked (GlcNAc...) asparagine glycan. The helical transmembrane segment at 26 to 46 (IIFAVCLLMYLITLLGNIFLI) threads the bilayer. Residues 47–54 (SITILDSH) are Cytoplasmic-facing. Residues 55-75 (LHTPMYLFLSNLSFLDIWYSS) traverse the membrane as a helical segment. At 76–99 (SALSPMLANFVSGRNTISFSGCAT) the chain is on the extracellular side. Cys-97 and Cys-189 are joined by a disulfide. A helical transmembrane segment spans residues 100 to 120 (QMYLSLAMGSTECVLLPMMAY). Residues 121-139 (DRYVAICNPLRYPVIMNRR) lie on the Cytoplasmic side of the membrane. A helical membrane pass occupies residues 140–160 (TCVQIAAGSWMTGCLTAMVEM). Topologically, residues 161-197 (MSVLPLSLCGNSIINHFTCEILAILKLVCVDTSLVQL) are extracellular. Residues 198-217 (IMLVISVLLLPMPMLLICIS) traverse the membrane as a helical segment. Residues 218–237 (YAFILASILRISSVEGRSKA) lie on the Cytoplasmic side of the membrane. Residues 238–258 (FSTCTAHLMVVVLFYGTALSM) traverse the membrane as a helical segment. The Extracellular segment spans residues 259-271 (HLKPSAVDSQEID). The chain crosses the membrane as a helical span at residues 272 to 292 (KFMALVYAGQTPMLNPIIYSL). The Cytoplasmic segment spans residues 293 to 319 (RNKEVKVALKKLLIRNHFNTAFISILK).

The protein belongs to the G-protein coupled receptor 1 family.

The protein localises to the cell membrane. Its function is as follows. Odorant receptor. In Homo sapiens (Human), this protein is Olfactory receptor 13F1 (OR13F1).